We begin with the raw amino-acid sequence, 583 residues long: Aspartyl protease APCB1 (583 aa).

The helical transmembrane segment at 83-103 threads the bilayer; sequence LVLGLLGISLLAVAFYASVFP. A Peptidase A1 domain is found at 203–564; the sequence is YYTRILVGKP…DNVKRRIGWM (362 aa). Active-site residues include aspartate 223 and aspartate 431.

The protein belongs to the peptidase A1 family. In terms of assembly, interacts with BAG6 and BAGP1.

The protein localises to the membrane. Involved in proteolytic processing of BAG6 and plant basal immunity. In Arabidopsis thaliana (Mouse-ear cress), this protein is Aspartyl protease APCB1.